The primary structure comprises 203 residues: uncharacterized protein (203 aa).

An N-terminal signal peptide occupies residues 1–20; that stretch reads MDELILPILILLFLVFVAYF.

This is an uncharacterized protein from Pasteurella multocida (strain Pm70).